The following is a 1336-amino-acid chain: DNA-directed RNA polymerase subunit beta' (1336 aa).

4 residues coordinate Zn(2+): Cys-60, Cys-62, Cys-75, and Cys-78. Residues Asp-535, Asp-537, and Asp-539 each coordinate Mg(2+). The Zn(2+) site is built by Cys-902, Cys-984, Cys-991, and Cys-994.

Belongs to the RNA polymerase beta' chain family. In terms of assembly, the RNAP catalytic core consists of 2 alpha, 1 beta, 1 beta' and 1 omega subunit. When a sigma factor is associated with the core the holoenzyme is formed, which can initiate transcription. Mg(2+) is required as a cofactor. It depends on Zn(2+) as a cofactor.

It catalyses the reaction RNA(n) + a ribonucleoside 5'-triphosphate = RNA(n+1) + diphosphate. In terms of biological role, DNA-dependent RNA polymerase catalyzes the transcription of DNA into RNA using the four ribonucleoside triphosphates as substrates. In Corynebacterium diphtheriae (strain ATCC 700971 / NCTC 13129 / Biotype gravis), this protein is DNA-directed RNA polymerase subunit beta'.